Consider the following 798-residue polypeptide: Phenylalanine--tRNA ligase beta subunit (798 aa).

The tRNA-binding domain occupies 39–148 (GKDLDNVVIG…EDAPIGTEYR (110 aa)). One can recognise a B5 domain in the interval 401 to 477 (PQRAEISLNL…RMYGFDNIEA (77 aa)). Mg(2+) contacts are provided by aspartate 455, aspartate 461, glutamate 464, and glutamate 465. The 93-residue stretch at 705-797 (SKYPEVLRDL…IKDKYNGEIR (93 aa)) folds into the FDX-ACB domain.

The protein belongs to the phenylalanyl-tRNA synthetase beta subunit family. Type 1 subfamily. Tetramer of two alpha and two beta subunits. Mg(2+) is required as a cofactor.

Its subcellular location is the cytoplasm. The enzyme catalyses tRNA(Phe) + L-phenylalanine + ATP = L-phenylalanyl-tRNA(Phe) + AMP + diphosphate + H(+). This Fusobacterium nucleatum subsp. nucleatum (strain ATCC 25586 / DSM 15643 / BCRC 10681 / CIP 101130 / JCM 8532 / KCTC 2640 / LMG 13131 / VPI 4355) protein is Phenylalanine--tRNA ligase beta subunit.